A 313-amino-acid chain; its full sequence is Short-chain dehydrogenase/reductase family 9C member 7 (313 aa).

29 to 53 (FITGCDSGFGNLLARQLVDRGMRVL) is a binding site for NADP(+). Ser160 serves as a coordination point for substrate. The active-site Proton acceptor is the Tyr172. The residue at position 185 (Ser185) is a Phosphoserine.

This sequence belongs to the short-chain dehydrogenases/reductases (SDR) family.

Its subcellular location is the cytoplasm. It carries out the reaction a N-[omega-(9R,10R)-epoxy-(13R)-hydroxy-(11E)-octadecenoyloxy]acyl-beta-D-glucosyl-(1&lt;-&gt;1)-sphing-4E-enine + NAD(+) = a N-[omega-(9R,10R)-epoxy-13-oxo-(11E)-octadecenoyloxy]acyl-beta-D-glucosyl-(1&lt;-&gt;1)-sphing-4E-enine + NADH + H(+). The catalysed reaction is a N-[omega-(9R,10R)-epoxy-(13R)-hydroxy-(11E)-octadecenoyloxy]-acylsphing-4E-enine + NAD(+) = a N-[omega-(9R,10R)-epoxy-13-oxo-(11E)-octadecenoyloxy]-acylsphing-4E-enine + NADH + H(+). Plays a crucial role in the formation of the epidermal permeability barrier. Catalyzes the NAD+-dependent dehydrogenation of the linoleate 9,10-trans-epoxy-11E-13-alcohol esterified in omega-O-acylceramides (such as in N-[omega-(9R,10R)-epoxy-(13R)-hydroxy-(11E)-octadecenoyloxy]-acylsphing-4E-enine) to the corresponding 13-ketone, the reactive moiety required for binding of epidermal ceramides to proteins. Displays weak conversion of all-trans-retinal to all-trans-retinol in the presence of NADH. Has apparently no steroid dehydrogenase activity. The protein is Short-chain dehydrogenase/reductase family 9C member 7 (SDR9C7) of Bos taurus (Bovine).